Here is a 199-residue protein sequence, read N- to C-terminus: V-type proton ATPase subunit E (199 aa).

Belongs to the V-ATPase E subunit family.

In terms of biological role, produces ATP from ADP in the presence of a proton gradient across the membrane. This chain is V-type proton ATPase subunit E, found in Clostridium botulinum (strain 657 / Type Ba4).